Here is a 662-residue protein sequence, read N- to C-terminus: uncharacterized protein (662 aa).

16 helical membrane passes run 10 to 30 (SSIV…GWPV), 46 to 66 (PVIG…FLPI), 68 to 88 (AINL…LSKG), 101 to 121 (GFCW…EIIP), 167 to 187 (LIYY…TGAT), 193 to 213 (IALT…LAVA), 217 to 237 (SAYA…KPAV), 263 to 283 (PWVP…MAYL), 285 to 305 (ILYS…AILA), 312 to 332 (MWAG…LSVS), 342 to 362 (EVLI…AVLI), 373 to 393 (KVVE…LDIP), 394 to 414 (GFWL…FLIW), 432 to 452 (ALTV…SVIM), 460 to 480 (VLIP…STTI), and 485 to 505 (LVGR…ILVG).

The protein resides in the cell membrane. This is an uncharacterized protein from Sinorhizobium fredii (strain NBRC 101917 / NGR234).